A 139-amino-acid chain; its full sequence is Gastrula zinc finger protein XlCGF29.1 (139 aa).

C2H2-type zinc fingers lie at residues 6 to 28 (FTCTECEESFSLKSRLIAHLLIH), 34 to 56 (FDSTKCGKGFRRNQYLKEHLSTH), 62 to 84 (FVCTVCGKTYKYKHGLNTHLHSH), 90 to 112 (FPCSECRKIFSSKASLDIHLRHH), and 117 to 139 (FPCTECDKTFKQKKNLKRHQMIH).

This sequence belongs to the krueppel C2H2-type zinc-finger protein family.

The protein resides in the nucleus. May be involved in transcriptional regulation. The chain is Gastrula zinc finger protein XlCGF29.1 from Xenopus laevis (African clawed frog).